Here is a 91-residue protein sequence, read N- to C-terminus: Small ribosomal subunit protein uS19 (91 aa).

The protein belongs to the universal ribosomal protein uS19 family.

Its function is as follows. Protein S19 forms a complex with S13 that binds strongly to the 16S ribosomal RNA. The sequence is that of Small ribosomal subunit protein uS19 from Afipia carboxidovorans (strain ATCC 49405 / DSM 1227 / KCTC 32145 / OM5) (Oligotropha carboxidovorans).